The sequence spans 390 residues: Homoserine O-succinyltransferase (390 aa).

The 310-residue stretch at 56–365 (NAVLICHALS…SPHGHDAFLL (310 aa)) folds into the AB hydrolase-1 domain. S162 serves as the catalytic Nucleophile. R232 contributes to the substrate binding site. Catalysis depends on residues D327 and H360. Residue D361 coordinates substrate.

It belongs to the AB hydrolase superfamily. MetX family. Homodimer.

The protein resides in the cytoplasm. The catalysed reaction is L-homoserine + succinyl-CoA = O-succinyl-L-homoserine + CoA. The protein operates within amino-acid biosynthesis; L-methionine biosynthesis via de novo pathway; O-succinyl-L-homoserine from L-homoserine: step 1/1. In terms of biological role, transfers a succinyl group from succinyl-CoA to L-homoserine, forming succinyl-L-homoserine. In vitro, also has serine succinyl transferase activity. This chain is Homoserine O-succinyltransferase, found in Litchfieldella anticariensis (strain DSM 16096 / CECT 5854 / CIP 108499 / LMG 22089 / FP35) (Halomonas anticariensis).